The following is a 353-amino-acid chain: Photosystem II protein D1 (353 aa).

Threonine 2 is subject to N-acetylthreonine. Residue threonine 2 is modified to Phosphothreonine. The next 3 membrane-spanning stretches (helical) occupy residues 29–46 (YIGW…TATS), 118–133 (HFLL…EWEL), and 142–156 (WIAV…AATA). A chlorophyll a-binding site is contributed by histidine 118. Position 126 (tyrosine 126) interacts with pheophytin a. Aspartate 170 and glutamate 189 together coordinate [CaMn4O5] cluster. Residues 197–218 (FHMLGVAGVFGGSLFSAMHGSL) form a helical membrane-spanning segment. Chlorophyll a is bound at residue histidine 198. A quinone contacts are provided by residues histidine 215 and 264–265 (SF). Histidine 215 provides a ligand contact to Fe cation. Position 272 (histidine 272) interacts with Fe cation. A helical transmembrane segment spans residues 274–288 (FLAAWPVVGIWFTAL). The [CaMn4O5] cluster site is built by histidine 332, glutamate 333, aspartate 342, and alanine 344. Residues 345–353 (AVEAPSING) constitute a propeptide that is removed on maturation.

The protein belongs to the reaction center PufL/M/PsbA/D family. As to quaternary structure, PSII is composed of 1 copy each of membrane proteins PsbA, PsbB, PsbC, PsbD, PsbE, PsbF, PsbH, PsbI, PsbJ, PsbK, PsbL, PsbM, PsbT, PsbX, PsbY, PsbZ, Psb30/Ycf12, at least 3 peripheral proteins of the oxygen-evolving complex and a large number of cofactors. It forms dimeric complexes. It depends on The D1/D2 heterodimer binds P680, chlorophylls that are the primary electron donor of PSII, and subsequent electron acceptors. It shares a non-heme iron and each subunit binds pheophytin, quinone, additional chlorophylls, carotenoids and lipids. D1 provides most of the ligands for the Mn4-Ca-O5 cluster of the oxygen-evolving complex (OEC). There is also a Cl(-1) ion associated with D1 and D2, which is required for oxygen evolution. The PSII complex binds additional chlorophylls, carotenoids and specific lipids. as a cofactor. In terms of processing, tyr-161 forms a radical intermediate that is referred to as redox-active TyrZ, YZ or Y-Z. Post-translationally, C-terminally processed by CTPA; processing is essential to allow assembly of the oxygen-evolving complex and thus photosynthetic growth.

It localises to the plastid. It is found in the chloroplast thylakoid membrane. The catalysed reaction is 2 a plastoquinone + 4 hnu + 2 H2O = 2 a plastoquinol + O2. Its function is as follows. Photosystem II (PSII) is a light-driven water:plastoquinone oxidoreductase that uses light energy to abstract electrons from H(2)O, generating O(2) and a proton gradient subsequently used for ATP formation. It consists of a core antenna complex that captures photons, and an electron transfer chain that converts photonic excitation into a charge separation. The D1/D2 (PsbA/PsbD) reaction center heterodimer binds P680, the primary electron donor of PSII as well as several subsequent electron acceptors. This Lotus japonicus (Lotus corniculatus var. japonicus) protein is Photosystem II protein D1.